The chain runs to 332 residues: MPIVVTQAHIDRVGIAADLLDASPVSLQVLGRPTAINTVVIKTYIAAVMELASKQGGSLAGVDIRPSVLLKDTAIFTKPKAKSADVESDVDVLDTGIYSVPGLARKPVTHRWPSEGIYSGVTALMGATGSGKSITLNEKLRPDVLIRWGEVAEAYDELDTAVHISTLDEMLIVCIGLGALGFNVAVDSVRPLLFRLKGAASAGGIVAVFYSLLTDISNLFTQYDCSVVMVVNPMVDAEKIEYVFGQVMASTVGAILCADGNVSRTMFRTNKGRIFNGAAPLAADTHMPSMDRPTSMKALDHTSIASVAPLERGSVDTDDRNSAPRRGANFSL.

An involved in the regulation and mechanisms of transcription, replication and genome packaging region spans residues 111-138 (RWPSEGIYSGVTALMGATGSGKSITLNE). Residue 126–133 (GATGSGKS) participates in ATP binding. Positions 310-332 (LERGSVDTDDRNSAPRRGANFSL) are disordered. The span at 313–322 (GSVDTDDRNS) shows a compositional bias: basic and acidic residues.

Homohexamer. Part of the packaging complex composed of RDRP, P4 and P7.

Its subcellular location is the virion. The enzyme catalyses a ribonucleoside 5'-triphosphate + H2O = a ribonucleoside 5'-diphosphate + phosphate + H(+). Packaging motor with helicase and translocase activities. Part of the packaging complex that packages the viral RNA segments, replicate them into a double-stranded form and transcribe them. is one of the structural proteins of the polyhedral procapsid, which is responsible for genomic replication and transcription. Displays single-stranded RNA-stimulated NTPase activity. The protein is Packaging enzyme P4 (P4) of Pseudomonas savastanoi pv. phaseolicola (Pseudomonas syringae pv. phaseolicola).